A 271-amino-acid polypeptide reads, in one-letter code: ATP synthase subunit delta (271 aa).

The protein belongs to the ATPase delta chain family. F-type ATPases have 2 components, F(1) - the catalytic core - and F(0) - the membrane proton channel. F(1) has five subunits: alpha(3), beta(3), gamma(1), delta(1), epsilon(1). F(0) has three main subunits: a(1), b(2) and c(10-14). The alpha and beta chains form an alternating ring which encloses part of the gamma chain. F(1) is attached to F(0) by a central stalk formed by the gamma and epsilon chains, while a peripheral stalk is formed by the delta and b chains.

Its subcellular location is the cell membrane. In terms of biological role, f(1)F(0) ATP synthase produces ATP from ADP in the presence of a proton or sodium gradient. F-type ATPases consist of two structural domains, F(1) containing the extramembraneous catalytic core and F(0) containing the membrane proton channel, linked together by a central stalk and a peripheral stalk. During catalysis, ATP synthesis in the catalytic domain of F(1) is coupled via a rotary mechanism of the central stalk subunits to proton translocation. Its function is as follows. This protein is part of the stalk that links CF(0) to CF(1). It either transmits conformational changes from CF(0) to CF(1) or is implicated in proton conduction. This is ATP synthase subunit delta from Renibacterium salmoninarum (strain ATCC 33209 / DSM 20767 / JCM 11484 / NBRC 15589 / NCIMB 2235).